The following is a 295-amino-acid chain: Aspartate carbamoyltransferase catalytic subunit (295 aa).

R54 and T55 together coordinate carbamoyl phosphate. K82 is a binding site for L-aspartate. Carbamoyl phosphate-binding residues include R104, H132, and Q135. Residues R165 and R218 each coordinate L-aspartate. Carbamoyl phosphate contacts are provided by G257 and P258.

It belongs to the aspartate/ornithine carbamoyltransferase superfamily. ATCase family. Heterododecamer (2C3:3R2) of six catalytic PyrB chains organized as two trimers (C3), and six regulatory PyrI chains organized as three dimers (R2).

It carries out the reaction carbamoyl phosphate + L-aspartate = N-carbamoyl-L-aspartate + phosphate + H(+). It participates in pyrimidine metabolism; UMP biosynthesis via de novo pathway; (S)-dihydroorotate from bicarbonate: step 2/3. Functionally, catalyzes the condensation of carbamoyl phosphate and aspartate to form carbamoyl aspartate and inorganic phosphate, the committed step in the de novo pyrimidine nucleotide biosynthesis pathway. The sequence is that of Aspartate carbamoyltransferase catalytic subunit from Wolbachia pipientis wMel.